Reading from the N-terminus, the 346-residue chain is 3 beta-hydroxysteroid dehydrogenase/Delta 5--&gt;4-isomerase (346 aa).

The active-site Proton acceptor is Y147. K151 contributes to the NAD(+) binding site.

Belongs to the 3-beta-HSD family.

The enzyme catalyses a 3beta-hydroxy-Delta(5)-steroid + NAD(+) = a 3-oxo-Delta(5)-steroid + NADH + H(+). The catalysed reaction is a 3-oxo-Delta(5)-steroid = a 3-oxo-Delta(4)-steroid. It participates in lipid metabolism; steroid biosynthesis. Its function is as follows. Catalyzes the oxidative conversion of Delta(5)-ene-3-beta-hydroxy steroid, and the oxidative conversion of ketosteroids. The 3-beta-HSD enzymatic system plays a crucial role in the biosynthesis of all classes of hormonal steroids. During viral infection, steroid production contributes to virulence by inhibiting the host inflammatory response. This chain is 3 beta-hydroxysteroid dehydrogenase/Delta 5--&gt;4-isomerase (OPG174), found in Vaccinia virus (strain Western Reserve) (VACV).